Here is a 132-residue protein sequence, read N- to C-terminus: uncharacterized protein (132 aa).

In terms of domain architecture, HTH merR-type spans Met1–Leu69. The H-T-H motif DNA-binding region spans Gly4–Ile23.

The protein localises to the cytoplasm. This is an uncharacterized protein from Pseudomonas aeruginosa (strain ATCC 15692 / DSM 22644 / CIP 104116 / JCM 14847 / LMG 12228 / 1C / PRS 101 / PAO1).